Reading from the N-terminus, the 322-residue chain is ATP-dependent 6-phosphofructokinase 1 (322 aa).

Position 11 (G11) interacts with ATP. ADP is bound at residue R21 to R25. ATP contacts are provided by residues R72–S73 and G102–T105. Position 103 (D103) interacts with Mg(2+). A substrate-binding site is contributed by T126–D128. The active-site Proton acceptor is D128. R155 contacts ADP. Substrate is bound by residues R163 and M170–R172. Residues G186–E188, R212, and K214–S216 contribute to the ADP site. Substrate contacts are provided by residues E223, R246, and H252–R255.

It belongs to the phosphofructokinase type A (PFKA) family. ATP-dependent PFK group I subfamily. Prokaryotic clade 'B1' sub-subfamily. Homotetramer. The cofactor is Mg(2+).

The protein localises to the cytoplasm. The catalysed reaction is beta-D-fructose 6-phosphate + ATP = beta-D-fructose 1,6-bisphosphate + ADP + H(+). It functions in the pathway carbohydrate degradation; glycolysis; D-glyceraldehyde 3-phosphate and glycerone phosphate from D-glucose: step 3/4. Allosterically activated by ADP and other diphosphonucleosides. Allosterically inhibited by phosphoenolpyruvate which induces the dissociation of the active tetramer into an inactive two-subunit forms. Functionally, catalyzes the phosphorylation of D-fructose 6-phosphate to fructose 1,6-bisphosphate by ATP, the first committing step of glycolysis. In Thermus thermophilus (strain ATCC 27634 / DSM 579 / HB8), this protein is ATP-dependent 6-phosphofructokinase 1.